Consider the following 616-residue polypeptide: Nucleoprotein (616 aa).

2 short sequence motifs (nuclear localization signal) span residues 230–233 (RPKR) and 473–476 (KPKK).

In terms of assembly, homomultimerizes to form the nucleocapsid. Binds to viral genomic RNA. Protein-RNA contacts are mediated by a combination of electrostatic interactions between positively charged residues and the phosphate backbone and planar interactions between aromatic side chains and bases.

It localises to the virion. It is found in the host nucleus. Its subcellular location is the host nucleolus. Its function is as follows. Encapsidates the negative strand viral RNA, protecting it from nucleases. The encapsidated genomic RNA is termed the ribonucleoprotein (RNP) and serves as template for transcription and replication. This Gadus morhua (Atlantic cod) protein is Nucleoprotein.